The sequence spans 780 residues: Striatin (780 aa).

Positions 53 to 120 (LHFLQHEWAR…QERAKYHKLK (68 aa)) form a coiled coil. The tract at residues 55–63 (FLQHEWARF) is caveolin-binding. The tract at residues 124–150 (ELNQGDMKPPSYDSDEGNETEVQPQQN) is disordered. A Phosphoserine modification is found at Ser137. A calmodulin-binding region spans residues 149–166 (QNSQLMWKQGRQLLRQYL). Residue Thr225 is modified to Phosphothreonine. A phosphoserine mark is found at Ser227, Ser229, Ser245, and Ser259. 2 disordered regions span residues 289–310 (DFLVTSEEGDNESRSAGDGTDW) and 365–387 (DELPSLQPSVGSPSRPSSSRLPE). Residues 299-310 (NESRSAGDGTDW) show a composition bias toward basic and acidic residues. WD repeat units follow at residues 461-500 (SHFDGIRALAFHPIEPVLITASEDHTLKMWNLQKTAPAKK), 514-553 (AHKGPVLCVVMSSNGEQCYSGGTDGLIQGWNTTNPNIDPY), 567-606 (GHTDAVWGLAYSAAHQRLLSCSADGTLRLWNTTEVAPALS), 662-701 (NSSCQINRVISHPTLPISITAHEDRHIKFYDNNTGKLIHS), 704-743 (AHLEAVTSLAVDPNGLYLMSGSHDCSIRLWNLESKTCIQE), and 750-780 (KFEESIHDVAFHPSKCYIASAGADALAKVFV).

This sequence belongs to the WD repeat striatin family. In terms of assembly, part of the core of STRIPAK complexes composed of PP2A catalytic and scaffolding subunits, the striatins (PP2A regulatory subunits), the striatin-associated proteins MOB4, STRIP1 and STRIP2, PDCD10 and members of the STE20 kinases, such as STK24 and STK26. Interacts with CTTNBP2; this interaction may regulate dendritic spine distribution of STRN. Activation of glutamate receptors weakens the interaction with CTTNBP2. In terms of tissue distribution, preferentially expressed in brain.

Its subcellular location is the cytoplasm. The protein localises to the membrane. It is found in the cell projection. It localises to the dendritic spine. In terms of biological role, calmodulin-binding scaffolding protein which is the center of the striatin-interacting phosphatase and kinase (STRIPAK) complexes. STRIPAK complexes have critical roles in protein (de)phosphorylation and are regulators of multiple signaling pathways including Hippo, MAPK, nuclear receptor and cytoskeleton remodeling. Different types of STRIPAK complexes are involved in a variety of biological processes such as cell growth, differentiation, apoptosis, metabolism and immune regulation. In Homo sapiens (Human), this protein is Striatin (STRN).